Here is a 1403-residue protein sequence, read N- to C-terminus: Nidogen-2 (1403 aa).

Residues 1 to 30 form the signal peptide; that stretch reads MFRDPTAGWLTPPSPLSLLVMLLLLSRVGA. The 167-residue stretch at 108–274 folds into the NIDO domain; it reads PFLADIDTSH…GVWAFHIGSR (167 aa). Positions 323–403 are disordered; the sequence is EDVEYPPVEP…KQGRPVGEGE (81 aa). Residues Ser-386 and Ser-475 are each glycosylated (O-linked (Xyl...) (chondroitin sulfate) serine). A compositionally biased stretch (polar residues) spans 386–395; it reads SASLDPQTKQ. One can recognise an EGF-like 1 domain in the interval 507–547; sequence NLETCEHSHGRCSQHAFCTDYTTGFCCHCQSRFYGNGKHCL. Disulfide bonds link Cys-511/Cys-524, Cys-518/Cys-533, and Cys-535/Cys-546. Positions 551 to 781 constitute a Nidogen G2 beta-barrel domain; it reads APHRVNGKVS…GPVEVDSAPV (231 aa). Asn-681, Asn-716, and Asn-726 each carry an N-linked (GlcNAc...) asparagine glycan. One can recognise an EGF-like 2 domain in the interval 782-823; that stretch reads GVNPCYDGSHTCDTTARCHPGTGVDYTCECTPGFQGDGRSCV. Disulfide bonds link Cys-786/Cys-799, Cys-793/Cys-809, Cys-811/Cys-822, Cys-828/Cys-841, Cys-835/Cys-850, Cys-852/Cys-865, Cys-875/Cys-890, Cys-882/Cys-900, Cys-902/Cys-913, Cys-919/Cys-930, Cys-924/Cys-939, Cys-941/Cys-952, Cys-968/Cys-991, Cys-1002/Cys-1009, Cys-1011/Cys-1033, Cys-1047/Cys-1071, Cys-1082/Cys-1089, and Cys-1091/Cys-1112. One can recognise an EGF-like 3; calcium-binding domain in the interval 824 to 862; it reads DVNECATGFHRCGPNSVCVNLVGSYRCECRSGYEFADDQ. One can recognise an EGF-like 4 domain in the interval 871–914; the sequence is PPNPCLDGSHTCAPEGQARCIHHGGSSFSCACLPGFIGTGHQCS. Residues 915–953 form the EGF-like 5; calcium-binding domain; sequence DVDECAENRCHEAAICYNTPGSFSCRCQPGYRGDGFHCT. The short motif at 946–948 is the Cell attachment site element; it reads RGD. Thyroglobulin type-1 domains lie at 965-1033 and 1044-1112; these read LKPC…PPHC and RTVC…RPAC. Positions 1021–1043 are disordered; it reads GTQTPPGSTPPHCGPPPEPTQRP. Over residues 1027 to 1040 the composition is skewed to pro residues; that stretch reads GSTPPHCGPPPEPT. Asn-1152 carries N-linked (GlcNAc...) asparagine glycosylation. LDL-receptor class B repeat units follow at residues 1182 to 1225, 1226 to 1268, 1269 to 1313, 1314 to 1355, and 1357 to 1401; these read RMVY…DHFR, RTMY…DPIR, GNLY…DPFS, KLLC…YADH, and YHTD…CPTG. The residue at position 1336 (Arg-1336) is an Omega-N-methylarginine.

As to quaternary structure, interacts with LAMA2. Interacts with COL13A1. Interacts with EFEMP2. In terms of processing, highly N- and O-glycosylated.

Its subcellular location is the secreted. The protein resides in the extracellular space. It localises to the extracellular matrix. It is found in the basement membrane. Its function is as follows. Cell adhesion glycoprotein. Might be involved in osteoblast differentiation. It probably has a role in cell-extracellular matrix interactions. In Mus musculus (Mouse), this protein is Nidogen-2 (Nid2).